The following is a 163-amino-acid chain: Nucleotide-binding protein SYNPCC7002_A1983 (163 aa).

This sequence belongs to the YajQ family.

Functionally, nucleotide-binding protein. The sequence is that of Nucleotide-binding protein SYNPCC7002_A1983 from Picosynechococcus sp. (strain ATCC 27264 / PCC 7002 / PR-6) (Agmenellum quadruplicatum).